The following is a 724-amino-acid chain: Ribosomal RNA large subunit methyltransferase K/L (724 aa).

The region spanning 42 to 153 (DAQRLVLWSR…KGRATLSVDL (112 aa)) is the THUMP domain.

Belongs to the methyltransferase superfamily. RlmKL family.

The protein localises to the cytoplasm. It catalyses the reaction guanosine(2445) in 23S rRNA + S-adenosyl-L-methionine = N(2)-methylguanosine(2445) in 23S rRNA + S-adenosyl-L-homocysteine + H(+). The catalysed reaction is guanosine(2069) in 23S rRNA + S-adenosyl-L-methionine = N(2)-methylguanosine(2069) in 23S rRNA + S-adenosyl-L-homocysteine + H(+). Its function is as follows. Specifically methylates the guanine in position 2445 (m2G2445) and the guanine in position 2069 (m7G2069) of 23S rRNA. This is Ribosomal RNA large subunit methyltransferase K/L from Xylella fastidiosa (strain 9a5c).